The following is a 327-amino-acid chain: Ankyrin repeat domain-containing protein SOWAHD (327 aa).

The tract at residues Met1 to Asp31 is disordered. ANK repeat units lie at residues Cys112 to Ser141, Asp147 to Gly162, and Pro186 to Asp216. Positions Glu251–Gly311 are disordered. The span at Asn260–Arg275 shows a compositional bias: low complexity. The span at His292–Ala305 shows a compositional bias: basic and acidic residues.

The protein belongs to the SOWAH family.

This chain is Ankyrin repeat domain-containing protein SOWAHD (Sowahd), found in Mus musculus (Mouse).